The sequence spans 71 residues: MVYARRRLSPIKPGEPIRYTDVELLKKFVTERGKILPRRITGLTAKQQRELTAAIKRARIMGLLYFVNKEG.

The protein belongs to the bacterial ribosomal protein bS18 family. Part of the 30S ribosomal subunit. Forms a tight heterodimer with protein bS6.

Functionally, binds as a heterodimer with protein bS6 to the central domain of the 16S rRNA, where it helps stabilize the platform of the 30S subunit. The protein is Small ribosomal subunit protein bS18 of Synechococcus sp. (strain JA-2-3B'a(2-13)) (Cyanobacteria bacterium Yellowstone B-Prime).